The following is an 89-amino-acid chain: Small ribosomal subunit protein uS15 (89 aa).

Belongs to the universal ribosomal protein uS15 family. Part of the 30S ribosomal subunit. Forms a bridge to the 50S subunit in the 70S ribosome, contacting the 23S rRNA.

In terms of biological role, one of the primary rRNA binding proteins, it binds directly to 16S rRNA where it helps nucleate assembly of the platform of the 30S subunit by binding and bridging several RNA helices of the 16S rRNA. Its function is as follows. Forms an intersubunit bridge (bridge B4) with the 23S rRNA of the 50S subunit in the ribosome. The sequence is that of Small ribosomal subunit protein uS15 from Acinetobacter baumannii (strain AB307-0294).